A 378-amino-acid polypeptide reads, in one-letter code: Bifunctional enzyme IspD/IspF (378 aa).

A 2-C-methyl-D-erythritol 4-phosphate cytidylyltransferase region spans residues 1–222 (MTETVAIIVA…RLLSPTGAPR (222 aa)). The interval 222 to 378 (RIGKGYDVHE…EAVALLMPKG (157 aa)) is 2-C-methyl-D-erythritol 2,4-cyclodiphosphate synthase. A divalent metal cation-binding residues include aspartate 228 and histidine 230. Residues 228–230 (DVH) and 254–255 (HS) each bind 4-CDP-2-C-methyl-D-erythritol 2-phosphate. Residue histidine 262 coordinates a divalent metal cation. 4-CDP-2-C-methyl-D-erythritol 2-phosphate is bound by residues 276–278 (DIG), 352–355 (TTTE), phenylalanine 359, and arginine 362.

The protein in the N-terminal section; belongs to the IspD/TarI cytidylyltransferase family. IspD subfamily. In the C-terminal section; belongs to the IspF family. Requires a divalent metal cation as cofactor.

The enzyme catalyses 2-C-methyl-D-erythritol 4-phosphate + CTP + H(+) = 4-CDP-2-C-methyl-D-erythritol + diphosphate. The catalysed reaction is 4-CDP-2-C-methyl-D-erythritol 2-phosphate = 2-C-methyl-D-erythritol 2,4-cyclic diphosphate + CMP. The protein operates within isoprenoid biosynthesis; isopentenyl diphosphate biosynthesis via DXP pathway; isopentenyl diphosphate from 1-deoxy-D-xylulose 5-phosphate: step 2/6. It participates in isoprenoid biosynthesis; isopentenyl diphosphate biosynthesis via DXP pathway; isopentenyl diphosphate from 1-deoxy-D-xylulose 5-phosphate: step 4/6. Bifunctional enzyme that catalyzes the formation of 4-diphosphocytidyl-2-C-methyl-D-erythritol from CTP and 2-C-methyl-D-erythritol 4-phosphate (MEP) (IspD), and catalyzes the conversion of 4-diphosphocytidyl-2-C-methyl-D-erythritol 2-phosphate (CDP-ME2P) to 2-C-methyl-D-erythritol 2,4-cyclodiphosphate (ME-CPP) with a corresponding release of cytidine 5-monophosphate (CMP) (IspF). The sequence is that of Bifunctional enzyme IspD/IspF from Hyphomonas neptunium (strain ATCC 15444).